Consider the following 120-residue polypeptide: Large ribosomal subunit protein eL34x (120 aa).

Residues 31 to 50 form a disordered region; it reads TYQTTNKRASGPKCPVTGKR.

The protein belongs to the eukaryotic ribosomal protein eL34 family.

This Arabidopsis thaliana (Mouse-ear cress) protein is Large ribosomal subunit protein eL34x (RPL34C).